A 248-amino-acid chain; its full sequence is Triosephosphate isomerase (248 aa).

9–11 (NWK) contributes to the substrate binding site. Catalysis depends on His-94, which acts as the Electrophile. Glu-166 (proton acceptor) is an active-site residue. Substrate is bound by residues Gly-172, Ser-212, and 233–234 (GG).

Belongs to the triosephosphate isomerase family. As to quaternary structure, homodimer.

It localises to the cytoplasm. The enzyme catalyses D-glyceraldehyde 3-phosphate = dihydroxyacetone phosphate. The protein operates within carbohydrate biosynthesis; gluconeogenesis. Its pathway is carbohydrate degradation; glycolysis; D-glyceraldehyde 3-phosphate from glycerone phosphate: step 1/1. Functionally, involved in the gluconeogenesis. Catalyzes stereospecifically the conversion of dihydroxyacetone phosphate (DHAP) to D-glyceraldehyde-3-phosphate (G3P). This chain is Triosephosphate isomerase, found in Clostridium botulinum (strain ATCC 19397 / Type A).